The following is a 46-amino-acid chain: Bottromycin D (46 aa).

Residues 10–46 (MTADFLNDDPNNAELSSLEMEELESWGAWSDDTDQSV) constitute a propeptide that is removed on maturation.

In terms of processing, the precursor peptide is first ribosomally synthesized and then highly tailored by specific enzymes to yield the final natural product. These modifications include several methylations, cyclization and the formation of t-Leu and Thia-beta-Ala residues.

The protein localises to the secreted. Functionally, bottromycin D is a ribosomally synthesized and post-translationally modified peptide (RiPP) that displays antibiotic activity against methicillin-resistant S.aureus (MRSA). This chain is Bottromycin D, found in Streptomyces sp.